Here is a 309-residue protein sequence, read N- to C-terminus: Coproporphyrin III ferrochelatase (309 aa).

Fe-coproporphyrin III contacts are provided by residues Y12, T14, R29, 45 to 46 (RY), S53, and Y124. The Fe(2+) site is built by H182 and E263.

The protein belongs to the ferrochelatase family. As to quaternary structure, monomer.

Its subcellular location is the cytoplasm. It catalyses the reaction Fe-coproporphyrin III + 2 H(+) = coproporphyrin III + Fe(2+). It participates in porphyrin-containing compound metabolism; protoheme biosynthesis. Involved in coproporphyrin-dependent heme b biosynthesis. Catalyzes the insertion of ferrous iron into coproporphyrin III to form Fe-coproporphyrin III. This is Coproporphyrin III ferrochelatase from Listeria monocytogenes serovar 1/2a (strain ATCC BAA-679 / EGD-e).